The primary structure comprises 517 residues: Succinyl-CoA:3-ketoacid coenzyme A transferase 2, mitochondrial (517 aa).

A mitochondrion-targeting transit peptide spans 1 to 39 (MAALRLLASVLGRGVPAGGSGLALSQGCARCFATSPRLR). The active-site 5-glutamyl coenzyme A thioester intermediate is the Glu341.

This sequence belongs to the 3-oxoacid CoA-transferase family. As to quaternary structure, homodimer. Testis specific.

The protein resides in the mitochondrion. The catalysed reaction is a 3-oxo acid + succinyl-CoA = a 3-oxoacyl-CoA + succinate. Its pathway is ketone metabolism; succinyl-CoA degradation; acetoacetyl-CoA from succinyl-CoA: step 1/1. Key enzyme for ketone body catabolism. Transfers the CoA moiety from succinate to acetoacetate. Formation of the enzyme-CoA intermediate proceeds via an unstable anhydride species formed between the carboxylate groups of the enzyme and substrate. In Homo sapiens (Human), this protein is Succinyl-CoA:3-ketoacid coenzyme A transferase 2, mitochondrial (OXCT2).